The primary structure comprises 592 residues: Imidazole glycerol phosphate synthase hisHF, chloroplastic (592 aa).

A chloroplast-targeting transit peptide spans 1 to 55 (MEATAAPFSSIVSSRQNFSSSSSIRASSPASLFLSQKSIGNVNRKFKSPRSLSVR). A Glutamine amidotransferase type-1 domain is found at 63 to 271 (VVTLLDYGAG…LHPKLPATQK (209 aa)). Residues Cys-141, His-246, and Glu-248 each act as for GATase activity in the active site. Residues 280–592 (LAKRVIACLD…LQEERIEVRI (313 aa)) are cyclase. Active-site residues include Asp-289 and Asp-447.

It in the C-terminal section; belongs to the HisA/HisF family.

The protein localises to the plastid. It localises to the chloroplast. It carries out the reaction 5-[(5-phospho-1-deoxy-D-ribulos-1-ylimino)methylamino]-1-(5-phospho-beta-D-ribosyl)imidazole-4-carboxamide + L-glutamine = D-erythro-1-(imidazol-4-yl)glycerol 3-phosphate + 5-amino-1-(5-phospho-beta-D-ribosyl)imidazole-4-carboxamide + L-glutamate + H(+). It catalyses the reaction L-glutamine + H2O = L-glutamate + NH4(+). It participates in amino-acid biosynthesis; L-histidine biosynthesis; L-histidine from 5-phospho-alpha-D-ribose 1-diphosphate: step 5/9. Functionally, IGPS catalyzes the conversion of PRFAR and glutamine to IGP, AICAR and glutamate. The glutaminase domain produces the ammonia necessary for the cyclase domain to produce IGP and AICAR from PRFAR. The ammonia is channeled to the active site of the cyclase domain. This is Imidazole glycerol phosphate synthase hisHF, chloroplastic (HISN4) from Arabidopsis thaliana (Mouse-ear cress).